Here is a 902-residue protein sequence, read N- to C-terminus: HTH-type transcriptional regulator MalT (902 aa).

An ATP-binding site is contributed by 39 to 46 (SPAGYGKT). Positions 832–897 (ELVRTSPLTQ…EAVQTAEQLL (66 aa)) constitute an HTH luxR-type domain. The H-T-H motif DNA-binding region spans 856-875 (NEQIAHELDVAGTTIKTHIR).

The protein belongs to the MalT family. As to quaternary structure, monomer in solution. Oligomerizes to an active state in the presence of the positive effectors ATP and maltotriose.

Activated by ATP and maltotriose, which are both required for DNA binding. In terms of biological role, positively regulates the transcription of the maltose regulon whose gene products are responsible for uptake and catabolism of malto-oligosaccharides. Specifically binds to the promoter region of its target genes, recognizing a short DNA motif called the MalT box. This is HTH-type transcriptional regulator MalT from Vibrio cholerae serotype O1 (strain ATCC 39315 / El Tor Inaba N16961).